A 490-amino-acid polypeptide reads, in one-letter code: Bifunctional protein HldE (490 aa).

The segment at 1 to 330 (MERKNVESLF…GSLGFQHGEG (330 aa)) is ribokinase. 205–208 (NRKE) lines the ATP pocket. Asp275 is a catalytic residue. The cytidylyltransferase stretch occupies residues 356–490 (FTNGCFDLLH…EKILKAYGEE (135 aa)).

In the N-terminal section; belongs to the carbohydrate kinase PfkB family. The protein in the C-terminal section; belongs to the cytidylyltransferase family. In terms of assembly, homodimer.

It carries out the reaction D-glycero-beta-D-manno-heptose 7-phosphate + ATP = D-glycero-beta-D-manno-heptose 1,7-bisphosphate + ADP + H(+). The catalysed reaction is D-glycero-beta-D-manno-heptose 1-phosphate + ATP + H(+) = ADP-D-glycero-beta-D-manno-heptose + diphosphate. It functions in the pathway nucleotide-sugar biosynthesis; ADP-L-glycero-beta-D-manno-heptose biosynthesis; ADP-L-glycero-beta-D-manno-heptose from D-glycero-beta-D-manno-heptose 7-phosphate: step 1/4. The protein operates within nucleotide-sugar biosynthesis; ADP-L-glycero-beta-D-manno-heptose biosynthesis; ADP-L-glycero-beta-D-manno-heptose from D-glycero-beta-D-manno-heptose 7-phosphate: step 3/4. Its function is as follows. Catalyzes the phosphorylation of D-glycero-D-manno-heptose 7-phosphate at the C-1 position to selectively form D-glycero-beta-D-manno-heptose-1,7-bisphosphate. Functionally, catalyzes the ADP transfer from ATP to D-glycero-beta-D-manno-heptose 1-phosphate, yielding ADP-D-glycero-beta-D-manno-heptose. The protein is Bifunctional protein HldE of Geobacter sulfurreducens (strain ATCC 51573 / DSM 12127 / PCA).